The following is a 201-amino-acid chain: Small ribosomal subunit protein uS4 (201 aa).

The 61-residue stretch at 91 to 151 (SRLDNVVYRA…EKSQKMNWFE (61 aa)) folds into the S4 RNA-binding domain.

The protein belongs to the universal ribosomal protein uS4 family. In terms of assembly, part of the 30S ribosomal subunit. Contacts protein S5. The interaction surface between S4 and S5 is involved in control of translational fidelity.

Its function is as follows. One of the primary rRNA binding proteins, it binds directly to 16S rRNA where it nucleates assembly of the body of the 30S subunit. In terms of biological role, with S5 and S12 plays an important role in translational accuracy. The protein is Small ribosomal subunit protein uS4 of Corynebacterium efficiens (strain DSM 44549 / YS-314 / AJ 12310 / JCM 11189 / NBRC 100395).